A 671-amino-acid polypeptide reads, in one-letter code: cGMP-dependent protein kinase 1 (671 aa).

Residue S2 is modified to N-acetylserine. The stretch at S2–T59 forms a coiled coil. The tract at residues S2–D102 is required for dimerization. The leucine-zipper stretch occupies residues A9–Q44. Residues P50 to H75 are autoinhibitory domain. T59 carries the post-translational modification Phosphothreonine; by autocatalysis. Positions F103–P220 are cGMP-binding, high affinity. 3',5'-cyclic GMP is bound by residues G167–A170, R177–T178, R282, G291–A294, R301–T302, and Y336. The segment at T221 to A341 is cGMP-binding, low affinity. A Protein kinase domain is found at F360–F619. ATP-binding positions include L366–V374 and K390. The Proton acceptor role is filled by D484. T515 is modified (phosphothreonine). One can recognise an AGC-kinase C-terminal domain in the interval E620–F671. A disordered region spans residues P635 to F671. Residues F652–P661 show a composition bias toward acidic residues.

It belongs to the protein kinase superfamily. AGC Ser/Thr protein kinase family. cGMP subfamily. In terms of assembly, isoform alpha: parallel homodimer or heterodimer and also heterotetramer. Interacts directly with PPP1R12A. Non-covalent dimer of dimer of PRKG1-PRKG1 and PPP1R12A-PPP1R12A. This interaction targets PRKG1 to stress fibers to mediate smooth muscle cell relaxation and vasodilation in responses to rises in cGMP. Isoform beta: antiparallel homodimer. Part of cGMP kinase signaling complex at least composed of ACTA2/alpha-actin, CNN1/calponin H1, PLN/phospholamban, PRKG1 and ITPR1. Interacts with IRAG1. Forms a stable complex with ITPR1, IRAG1, and isoform beta of PRKG1. Interacts with TRPC7 (via ankyrin repeat domain). Isoform alpha interacts with RGS2. Interacts with GTF2I. In terms of processing, autophosphorylation increases kinase activity. 65 kDa monomer is produced by proteolytic cleavage. In terms of tissue distribution, detected in cerebellum, hippocampus, dorsomedial hypothalamus, medulla, subcommissural organ, cerebral cortex, amygdala, habenulae, various hypothalamic regions, olfactory bulb, pituitary gland, and retina. Isoform alpha is prominent in the cerebellum and medulla, whereas isoform Beta is predominant in the cortex, hippocampus, hypothalamus, and olfactory bulb.

The protein resides in the cytoplasm. The catalysed reaction is L-seryl-[protein] + ATP = O-phospho-L-seryl-[protein] + ADP + H(+). It carries out the reaction L-threonyl-[protein] + ATP = O-phospho-L-threonyl-[protein] + ADP + H(+). In the absence of cGMP, PRKG1 activity is suppressed by autoinhibitory contacts. Its function is as follows. Serine/threonine protein kinase that acts as a key mediator of the nitric oxide (NO)/cGMP signaling pathway. GMP binding activates PRKG1, which phosphorylates serines and threonines on many cellular proteins. Numerous protein targets for PRKG1 phosphorylation are implicated in modulating cellular calcium, but the contribution of each of these targets may vary substantially among cell types. Proteins that are phosphorylated by PRKG1 regulate platelet activation and adhesion, smooth muscle contraction, cardiac function, gene expression, feedback of the NO-signaling pathway, and other processes involved in several aspects of the CNS like axon guidance, hippocampal and cerebellar learning, circadian rhythm and nociception. Smooth muscle relaxation is mediated through lowering of intracellular free calcium, by desensitization of contractile proteins to calcium, and by decrease in the contractile state of smooth muscle or in platelet activation. Regulates intracellular calcium levels via several pathways: phosphorylates IRAG1 and inhibits IP3-induced Ca(2+) release from intracellular stores, phosphorylation of KCNMA1 (BKCa) channels decreases intracellular Ca(2+) levels, which leads to increased opening of this channel. PRKG1 phosphorylates the canonical transient receptor potential channel (TRPC) family which inactivates the associated inward calcium current. Another mode of action of NO/cGMP/PKGI signaling involves PKGI-mediated inactivation of the Ras homolog gene family member A (RhoA). Phosphorylation of RHOA by PRKG1 blocks the action of this protein in myriad processes: regulation of RHOA translocation; decreasing contraction; controlling vesicle trafficking, reduction of myosin light chain phosphorylation resulting in vasorelaxation. Activation of PRKG1 by NO signaling also alters gene expression in a number of tissues. In smooth muscle cells, increased cGMP and PRKG1 activity influence expression of smooth muscle-specific contractile proteins, levels of proteins in the NO/cGMP signaling pathway, down-regulation of the matrix proteins osteopontin and thrombospondin-1 to limit smooth muscle cell migration and phenotype. Regulates vasodilator-stimulated phosphoprotein (VASP) functions in platelets and smooth muscle. This Mus musculus (Mouse) protein is cGMP-dependent protein kinase 1 (Prkg1).